The following is a 66-amino-acid chain: Sodium channel alpha-toxin Acra8 (66 aa).

In terms of domain architecture, LCN-type CS-alpha/beta spans 2 to 64 (RDGYIVDDKN…VPIKEKGRCN (63 aa)). Cystine bridges form between Cys12–Cys63, Cys16–Cys36, Cys22–Cys46, and Cys26–Cys48. Asn64 carries the post-translational modification Asparagine amide. Positions 65-66 (GR) are excised as a propeptide.

The protein belongs to the long (4 C-C) scorpion toxin superfamily. Sodium channel inhibitor family. Alpha subfamily. As to expression, expressed by the venom gland.

The protein localises to the secreted. Alpha toxins bind voltage-independently at site-3 of sodium channels (Nav) and inhibit the inactivation of the activated channels, thereby blocking neuronal transmission. The chain is Sodium channel alpha-toxin Acra8 from Androctonus crassicauda (Arabian fat-tailed scorpion).